The chain runs to 1058 residues: Carbamoyl phosphate synthase large chain (1058 aa).

The tract at residues 1-401 (MPKRTDIQKI…SLLKACRSLE (401 aa)) is carboxyphosphate synthetic domain. ATP-binding residues include arginine 129, arginine 169, glycine 175, glycine 176, arginine 208, isoleucine 210, glutamate 215, glycine 241, isoleucine 242, histidine 243, glutamine 284, and glutamate 298. An ATP-grasp 1 domain is found at 133–327 (KQLMEELEQP…IAKLAAKIAV (195 aa)). Residues glutamine 284, glutamate 298, and asparagine 300 each coordinate Mg(2+). Glutamine 284, glutamate 298, and asparagine 300 together coordinate Mn(2+). The interval 402-546 (IGVHHNEIPE…YSTYGWENES (145 aa)) is oligomerization domain. The tract at residues 547–929 (IKSDKESVLV…ALYKAFEASY (383 aa)) is carbamoyl phosphate synthetic domain. The 191-residue stretch at 671–861 (EQALKELDIP…MAQVATKLIL (191 aa)) folds into the ATP-grasp 2 domain. ATP contacts are provided by arginine 707, serine 746, isoleucine 748, glutamate 752, glycine 777, valine 778, histidine 779, serine 780, glutamine 820, and glutamate 832. Residues glutamine 820, glutamate 832, and asparagine 834 each coordinate Mg(2+). Positions 820, 832, and 834 each coordinate Mn(2+). An MGS-like domain is found at 930–1058 (LHLPTFGNVV…ESRSFVTEAI (129 aa)). An allosteric domain region spans residues 930-1058 (LHLPTFGNVV…ESRSFVTEAI (129 aa)).

The protein belongs to the CarB family. In terms of assembly, composed of two chains; the small (or glutamine) chain promotes the hydrolysis of glutamine to ammonia, which is used by the large (or ammonia) chain to synthesize carbamoyl phosphate. Tetramer of heterodimers (alpha,beta)4. Requires Mg(2+) as cofactor. Mn(2+) is required as a cofactor.

The enzyme catalyses hydrogencarbonate + L-glutamine + 2 ATP + H2O = carbamoyl phosphate + L-glutamate + 2 ADP + phosphate + 2 H(+). It catalyses the reaction hydrogencarbonate + NH4(+) + 2 ATP = carbamoyl phosphate + 2 ADP + phosphate + 2 H(+). Its pathway is amino-acid biosynthesis; L-arginine biosynthesis; carbamoyl phosphate from bicarbonate: step 1/1. It participates in pyrimidine metabolism; UMP biosynthesis via de novo pathway; (S)-dihydroorotate from bicarbonate: step 1/3. Its function is as follows. Large subunit of the glutamine-dependent carbamoyl phosphate synthetase (CPSase). CPSase catalyzes the formation of carbamoyl phosphate from the ammonia moiety of glutamine, carbonate, and phosphate donated by ATP, constituting the first step of 2 biosynthetic pathways, one leading to arginine and/or urea and the other to pyrimidine nucleotides. The large subunit (synthetase) binds the substrates ammonia (free or transferred from glutamine from the small subunit), hydrogencarbonate and ATP and carries out an ATP-coupled ligase reaction, activating hydrogencarbonate by forming carboxy phosphate which reacts with ammonia to form carbamoyl phosphate. This is Carbamoyl phosphate synthase large chain from Streptococcus pneumoniae (strain ATCC 700669 / Spain 23F-1).